The sequence spans 353 residues: ATP-dependent kinase YFH7 (353 aa).

Glycine 31–threonine 39 serves as a coordination point for ATP.

Belongs to the YFH7 family.

In terms of biological role, ATP-dependent kinase that could be involved in endoplasmic reticulum membrane assembly. In Saccharomyces cerevisiae (strain JAY291) (Baker's yeast), this protein is ATP-dependent kinase YFH7 (YFH7).